The sequence spans 152 residues: MGLSNKFKSFFFLDEEEEYYEEEVAREPEPMQKKTKKEKPNKNRFYAVEEDDAKVVSMQGAQFSSRMVLAEPRVYAEAQELADYLKEYKSVVVNLQRISHDQATRIVDFLSGTVYALGGDIQRVGNNIFLCTPDNVEVDGSISEMLDEQNFM.

Belongs to the SepF family. As to quaternary structure, homodimer. Interacts with FtsZ.

It localises to the cytoplasm. Cell division protein that is part of the divisome complex and is recruited early to the Z-ring. Probably stimulates Z-ring formation, perhaps through the cross-linking of FtsZ protofilaments. Its function overlaps with FtsA. In Listeria monocytogenes serotype 4b (strain CLIP80459), this protein is Cell division protein SepF.